The sequence spans 742 residues: Pyriculol/pyriculariol biosynthesis cluster transcription factor 1 (742 aa).

Positions 23–49 form a DNA-binding region, zn(2)-C6 fungal-type; that stretch reads CVLCQHRKIKCDRSFPCANCQRANVQC. Residues 85–116 are disordered; that stretch reads GKPDIARLTTKRSSLSQSPPKGEEPLPEWNRH. The segment covering 105 to 116 has biased composition (basic and acidic residues); that stretch reads KGEEPLPEWNRH.

The protein resides in the nucleus. In terms of biological role, transcriptional regulator; part of the gene cluster that mediates the biosynthesis of pyriculol and pyriculariol, two heptaketides that induce lesion formation upon application on rice leaves but are dispensable for pathogenicity. With TRF2, negatively regulates the expression of the gene cluster and the subsequent pyriculol and pyriculariol production. The polypeptide is Pyriculol/pyriculariol biosynthesis cluster transcription factor 1 (Pyricularia oryzae (strain 70-15 / ATCC MYA-4617 / FGSC 8958) (Rice blast fungus)).